Here is a 399-residue protein sequence, read N- to C-terminus: Bombesin receptor subtype-3 (399 aa).

Residues 1-41 are Extracellular-facing; sequence MSQRQPQSPNQTLISITNDTETSSSAVSNDTTPKGWTGDNS. Residues Asn-10, Asn-18, and Asn-29 are each glycosylated (N-linked (GlcNAc...) asparagine). The helical transmembrane segment at 42–63 threads the bilayer; sequence PGIEALCAIYITYAVIISVGIL. Residues 64–82 are Cytoplasmic-facing; it reads GNAILIKVFFKTKSMQTVP. The chain crosses the membrane as a helical span at residues 83 to 103; sequence NIFITSLAFGDLLLLLTCVPV. At 104–121 the chain is on the extracellular side; that stretch reads DATHYLAEGWLFGKVGCK. Cys-120 and Cys-203 are disulfide-bonded. The helical transmembrane segment at 122–143 threads the bilayer; sequence VLSFIRLTSVGVSVFTLTILSA. At 144–163 the chain is on the cytoplasmic side; that stretch reads DRYKAVVKPLERQPSNAILK. A helical transmembrane segment spans residues 164-184; that stretch reads TCAKAGGIWIMAMIFALPEAI. Residues 185–220 lie on the Extracellular side of the membrane; that stretch reads FSNVYTFQDPNRNVTFESCNSYPISERLLQEIHSLL. Residues 221 to 241 traverse the membrane as a helical segment; it reads CFLVFYIIPLSIISVYYSLIA. Residues 242 to 272 are Cytoplasmic-facing; that stretch reads RTLYKSTLNIPTEEQSHARKQIESRKRIAKT. A helical membrane pass occupies residues 273-293; that stretch reads VLVLVALFALCWLPNHLLYLY. The Extracellular segment spans residues 294–313; that stretch reads HSFTYESYAEPSDVPFVVTI. A helical membrane pass occupies residues 314–333; that stretch reads FSRVLAFSNSCVNPFALYWL. Residues 334–399 lie on the Cytoplasmic side of the membrane; the sequence is SKTFQKHFKA…STAKKGEDKV (66 aa). Residue Cys-347 is the site of S-palmitoyl cysteine attachment.

Belongs to the G-protein coupled receptor 1 family. In terms of assembly, interacts with C6orf89.

The protein localises to the cell membrane. Its function is as follows. Role in sperm cell division, maturation, or function. This receptor mediates its action by association with G proteins that activate a phosphatidylinositol-calcium second messenger system. The protein is Bombesin receptor subtype-3 (Brs3) of Rattus norvegicus (Rat).